Consider the following 416-residue polypeptide: Lactose permease (416 aa).

Topologically, residues 1–13 (MYYLKNTNFWMFG) are cytoplasmic. Residues 14–34 (FFFFFYFFIMGAYFPFFPIWL) form a helical membrane-spanning segment. Residues 35 to 45 (HEVNHISKGDT) are Periplasmic-facing. A helical membrane pass occupies residues 46-66 (GIIFACISLFSLLFQPIFGLL). Topologically, residues 67 to 75 (SDKLGLRKH) are cytoplasmic. Residues 76-96 (LLWVITGMLVMFAPFFIYVFG) traverse the membrane as a helical segment. A topological domain (periplasmic) is located at residue Pro97. Residues 98–118 (LLQVNILLGSIVGGIYLGFIY) form a helical membrane-spanning segment. Residues 119–144 (NAGAPAIEAYIEKASRRSNFEFGRAR) are Cytoplasmic-facing. The helical transmembrane segment at 145-165 (MFGCVGWALCASIAGIMFTIN) threads the bilayer. Position 166 (Asn166) is a topological domain, periplasmic. A helical membrane pass occupies residues 167-187 (QFVFWLGSGCAVILALLLLFS). Residues 188-211 (KTDVPSSAKVADAVGANNSAFSLK) are Cytoplasmic-facing. The chain crosses the membrane as a helical span at residues 212–232 (LALELFKQPKLWLISLYVVGV). The Periplasmic portion of the chain corresponds to 233–262 (SCTYDVFDQQFANFFTSFFATGEQGTRVFG). Residues 263-283 (YVTTMGELLNASIMFFAPLIV) traverse the membrane as a helical segment. The Cytoplasmic segment spans residues 284–290 (NRIGGKN). The helical transmembrane segment at 291 to 309 (ALLLAGTIMSVRIIGSHSH) threads the bilayer. Over 310 to 314 (TALEV) the chain is Periplasmic. The chain crosses the membrane as a helical span at residues 315-336 (VILKTLHMFEIPFLIVGCFKYI). Topologically, residues 337–347 (TSQFEVRFSAT) are cytoplasmic. A helical transmembrane segment spans residues 348-368 (IYLVCFCFFKQLAMIFMSVLA). At 369 to 378 (GKMYESIGFQ) the chain is on the periplasmic side. Residues 379–399 (GAYLVLGIIRVSFTLISVFTL) traverse the membrane as a helical segment. Residues 400-416 (SGPGPFSLLRRRESVAL) lie on the Cytoplasmic side of the membrane.

It belongs to the major facilitator superfamily. Oligosaccharide:H(+) symporter (OHS) (TC 2.A.1.5) family.

It is found in the cell inner membrane. It catalyses the reaction lactose(in) + H(+)(in) = lactose(out) + H(+)(out). Functionally, responsible for transport of beta-galactosides into the cell, with the concomitant import of a proton (symport system). This is Lactose permease (lacY) from Citrobacter freundii.